Reading from the N-terminus, the 367-residue chain is Coiled-coil domain-containing protein 34 (367 aa).

At Ser-55 the chain carries Phosphoserine. Disordered regions lie at residues 77-105, 191-228, and 310-349; these read FPFG…KVES, QKKN…KAKE, and YNPI…SSLA. Residues 82–97 are compositionally biased toward acidic residues; it reads DDSEGEDEEALDEDAR. Coiled-coil stretches lie at residues 87–108 and 153–280; these read EDEE…SLEG and RLQQ…AKNK. The segment covering 197 to 228 has biased composition (basic and acidic residues); the sequence is ERKEREQKINKEMEEKEAKKREKEHLQEKAKE. Over residues 339–349 the composition is skewed to low complexity; it reads ASQPLPSSSLA.

As to expression, expressed in testis and sperm.

It is found in the cell projection. The protein localises to the cilium. It localises to the flagellum. Functionally, involved in spermatogenesis. Has a probable role in anterograde intraflagellar transport which is essential for the formation of sperm flagella. The polypeptide is Coiled-coil domain-containing protein 34 (Ccdc34) (Mus musculus (Mouse)).